We begin with the raw amino-acid sequence, 193 residues long: UPF0301 protein SAV_5129 (193 aa).

The protein belongs to the UPF0301 (AlgH) family.

The polypeptide is UPF0301 protein SAV_5129 (Streptomyces avermitilis (strain ATCC 31267 / DSM 46492 / JCM 5070 / NBRC 14893 / NCIMB 12804 / NRRL 8165 / MA-4680)).